The sequence spans 94 residues: MSDRVRVHVWIRGRVQGVGFRAHTEAMALHAGVQGWVRNLRDGRVEAVFEGSPAAVEAMLRWCQQGSPGSVVEAIEQRSEPPEGLPTFEIRPTV.

Positions 6–92 (RVHVWIRGRV…EGLPTFEIRP (87 aa)) constitute an Acylphosphatase-like domain. Active-site residues include R21 and N39.

This sequence belongs to the acylphosphatase family.

The catalysed reaction is an acyl phosphate + H2O = a carboxylate + phosphate + H(+). The polypeptide is Acylphosphatase (acyP) (Synechococcus sp. (strain JA-2-3B'a(2-13)) (Cyanobacteria bacterium Yellowstone B-Prime)).